Here is a 455-residue protein sequence, read N- to C-terminus: Probable galactarate/D-glucarate transporter GudP (455 aa).

12 helical membrane-spanning segments follow: residues 19–39 (WFIV…RATL), 59–79 (YVFS…GWLL), 87–107 (IIAL…AIGF), 108–128 (FSAG…GLSE), 153–173 (AFFN…MGWL), 177–197 (FGWH…AVIW), 253–273 (IGVY…LTWF), 289–309 (GFVA…GGIV), 320–340 (LTFA…SMIV), 348–368 (WLVV…ALGW), 386–406 (LFNT…GYIV), and 414–434 (GALV…LLLV).

The protein belongs to the major facilitator superfamily. Phthalate permease family.

The protein resides in the cell membrane. The catalysed reaction is galactarate(in) + H(+)(in) = galactarate(out) + H(+)(out). It carries out the reaction D-glucarate(in) + H(+)(in) = D-glucarate(out) + H(+)(out). Its function is as follows. Probably involved in the uptake of galactarate and/or D-glucarate. The polypeptide is Probable galactarate/D-glucarate transporter GudP (Bacillus subtilis (strain 168)).